The chain runs to 506 residues: UDP-N-acetylmuramoyl-L-alanyl-D-glutamate--2,6-diaminopimelate ligase (506 aa).

Ser42 lines the UDP-N-acetyl-alpha-D-muramoyl-L-alanyl-D-glutamate pocket. ATP is bound at residue 125 to 131 (GTSGKTT). UDP-N-acetyl-alpha-D-muramoyl-L-alanyl-D-glutamate-binding positions include 166 to 167 (TT), Ser193, and Arg201. Lys233 carries the post-translational modification N6-carboxylysine. Meso-2,6-diaminopimelate is bound by residues Arg395, 419-422 (DNPR), Gly475, and Glu479. Positions 419 to 422 (DNPR) match the Meso-diaminopimelate recognition motif motif.

This sequence belongs to the MurCDEF family. MurE subfamily. Mg(2+) is required as a cofactor. Post-translationally, carboxylation is probably crucial for Mg(2+) binding and, consequently, for the gamma-phosphate positioning of ATP.

The protein resides in the cytoplasm. It catalyses the reaction UDP-N-acetyl-alpha-D-muramoyl-L-alanyl-D-glutamate + meso-2,6-diaminopimelate + ATP = UDP-N-acetyl-alpha-D-muramoyl-L-alanyl-gamma-D-glutamyl-meso-2,6-diaminopimelate + ADP + phosphate + H(+). It functions in the pathway cell wall biogenesis; peptidoglycan biosynthesis. Functionally, catalyzes the addition of meso-diaminopimelic acid to the nucleotide precursor UDP-N-acetylmuramoyl-L-alanyl-D-glutamate (UMAG) in the biosynthesis of bacterial cell-wall peptidoglycan. The sequence is that of UDP-N-acetylmuramoyl-L-alanyl-D-glutamate--2,6-diaminopimelate ligase from Streptomyces coelicolor (strain ATCC BAA-471 / A3(2) / M145).